We begin with the raw amino-acid sequence, 380 residues long: Beta-1,3-N-acetylglucosaminyltransferase lunatic fringe (380 aa).

Residues 1 to 8 (MLKRCGRR) are Cytoplasmic-facing. A helical; Signal-anchor for type II membrane protein membrane pass occupies residues 9 to 29 (LLLALAGALLACLLVLTADPP). At 30 to 380 (PPPVPAERGR…TSWCPRSAIF (351 aa)) the chain is on the lumenal side. A disordered region spans residues 85 to 110 (SRRDVGPPPGGAPRPADGPPRPLAEP). Residues 90–107 (GPPPGGAPRPADGPPRPL) show a composition bias toward pro residues. Arg-130 serves as a coordination point for substrate. N-linked (GlcNAc...) asparagine glycosylation is present at Asn-168. 2 disulfide bridges follow: Cys-169–Cys-180 and Cys-198–Cys-261. Residue Asp-202 coordinates substrate. Asp-203 is a binding site for Mn(2+). Asp-291 is an active-site residue. His-315 contacts Mn(2+). A disulfide bridge connects residues Cys-365 and Cys-374.

It belongs to the glycosyltransferase 31 family. Requires Mn(2+) as cofactor. It depends on Co(2+) as a cofactor. Post-translationally, a soluble form may be derived from the membrane form by proteolytic processing.

The protein resides in the golgi apparatus. It localises to the golgi apparatus membrane. It carries out the reaction 3-O-(alpha-L-fucosyl)-L-threonyl-[EGF-like domain protein] + UDP-N-acetyl-alpha-D-glucosamine = 3-O-(N-acetyl-beta-D-glucosaminyl-(1-&gt;3)-alpha-L-fucosyl)-L-threonyl-[EGF-like domain protein] + UDP + H(+). It catalyses the reaction 3-O-(alpha-L-fucosyl)-L-seryl-[EGF-like domain protein] + UDP-N-acetyl-alpha-D-glucosamine = 3-O-(N-acetyl-beta-D-glucosaminyl-(1-&gt;3)-alpha-L-fucosyl)-L-seryl-[EGF-like domain protein] + UDP + H(+). Its function is as follows. Glycosyltransferase that initiates the elongation of O-linked fucose residues attached to EGF-like repeats in the extracellular domain of Notch molecules. Modulates NOTCH1 activity by modifying O-fucose residues at specific EGF-like domains resulting in inhibition of NOTCH1 activation by JAG1 and enhancement of NOTCH1 activation by DLL1 via an increase in its binding to DLL1. Decreases the binding of JAG1 to NOTCH2 but not that of DLL1. Essential mediator of somite segmentation and patterning. This is Beta-1,3-N-acetylglucosaminyltransferase lunatic fringe (LFNG) from Bos taurus (Bovine).